The primary structure comprises 95 residues: Aspartyl/glutamyl-tRNA(Asn/Gln) amidotransferase subunit C (95 aa).

It belongs to the GatC family. In terms of assembly, heterotrimer of A, B and C subunits.

It carries out the reaction L-glutamyl-tRNA(Gln) + L-glutamine + ATP + H2O = L-glutaminyl-tRNA(Gln) + L-glutamate + ADP + phosphate + H(+). The enzyme catalyses L-aspartyl-tRNA(Asn) + L-glutamine + ATP + H2O = L-asparaginyl-tRNA(Asn) + L-glutamate + ADP + phosphate + 2 H(+). Allows the formation of correctly charged Asn-tRNA(Asn) or Gln-tRNA(Gln) through the transamidation of misacylated Asp-tRNA(Asn) or Glu-tRNA(Gln) in organisms which lack either or both of asparaginyl-tRNA or glutaminyl-tRNA synthetases. The reaction takes place in the presence of glutamine and ATP through an activated phospho-Asp-tRNA(Asn) or phospho-Glu-tRNA(Gln). The polypeptide is Aspartyl/glutamyl-tRNA(Asn/Gln) amidotransferase subunit C (Pseudomonas fluorescens (strain ATCC BAA-477 / NRRL B-23932 / Pf-5)).